Here is a 493-residue protein sequence, read N- to C-terminus: Ferruginol synthase 1 (493 aa).

Residues 2 to 22 (DSFPLLAALFFILAATWFISF) traverse the membrane as a helical segment. C437 contributes to the heme binding site.

This sequence belongs to the cytochrome P450 family. It depends on heme as a cofactor. As to expression, expressed in leaf glandular trichomes.

The protein localises to the membrane. It carries out the reaction abieta-8,11,13-triene + reduced [NADPH--hemoprotein reductase] + O2 = ferruginol + oxidized [NADPH--hemoprotein reductase] + H2O + H(+). The catalysed reaction is ferruginol + reduced [NADPH--hemoprotein reductase] + O2 = 11-hydroxyferruginol + oxidized [NADPH--hemoprotein reductase] + H2O + H(+). The enzyme catalyses miltiradiene + 2 reduced [NADPH--hemoprotein reductase] + 2 O2 = 11-oxomiltiradiene + 2 oxidized [NADPH--hemoprotein reductase] + 3 H2O + 2 H(+). It participates in secondary metabolite biosynthesis; terpenoid biosynthesis. Monooxygenase involved in the biosynthesis of labdane-related diterpenes natural products. Catalyzes the oxidation of abietatriene to produce ferruginol. Catalyzes the oxidation of ferruginol at C-12 to produce 11-hydroxyferruginol. Ferruginol and 11-hydroxyferruginol are intermediates in the biosynthesis of carnosate, a potent antioxidant. May also convert miltiradiene into 11-oxomiltiradiene. In Rosmarinus officinalis (Rosemary), this protein is Ferruginol synthase 1.